The sequence spans 304 residues: Ribonuclease Z (304 aa).

Zn(2+) contacts are provided by His63, His65, Asp67, His68, His143, Asp213, and His271. Asp67 serves as the catalytic Proton acceptor.

This sequence belongs to the RNase Z family. Homodimer. It depends on Zn(2+) as a cofactor.

The enzyme catalyses Endonucleolytic cleavage of RNA, removing extra 3' nucleotides from tRNA precursor, generating 3' termini of tRNAs. A 3'-hydroxy group is left at the tRNA terminus and a 5'-phosphoryl group is left at the trailer molecule.. Zinc phosphodiesterase, which displays some tRNA 3'-processing endonuclease activity. Probably involved in tRNA maturation, by removing a 3'-trailer from precursor tRNA. This Bacteroides fragilis (strain ATCC 25285 / DSM 2151 / CCUG 4856 / JCM 11019 / LMG 10263 / NCTC 9343 / Onslow / VPI 2553 / EN-2) protein is Ribonuclease Z.